Consider the following 239-residue polypeptide: Secreted effector CFEM9 (239 aa).

The N-terminal stretch at 1–18 (MRVLKFLSLMAMLGCTIG) is a signal peptide. A CFEM domain is found at 19–125 (QSGSATPGSL…DALRRREDEY (107 aa)). Cystine bridges form between cysteine 43/cysteine 82, cysteine 47/cysteine 77, cysteine 57/cysteine 63, and cysteine 65/cysteine 98. Aspartate 60 serves as a coordination point for heme. The span at 187 to 199 (KSATTTEATRNTV) shows a compositional bias: polar residues. The disordered stretch occupies residues 187–216 (KSATTTEATRNTVPASTTAPSPSPQLYTGN). Glycine 215 carries the GPI-anchor amidated glycine lipid modification. An N-linked (GlcNAc...) asparagine glycan is attached at asparagine 216. A propeptide spans 216 to 239 (NASTSRATVSLTVVLTVAAVYLVL) (removed in mature form).

It belongs to the RBT5 family.

It localises to the cell membrane. Its subcellular location is the secreted. It is found in the host nucleus. The protein resides in the host cell membrane. In terms of biological role, appears to function during host infection, and may play a role in suppressing the host immune response. The polypeptide is Secreted effector CFEM9 (Marssonina brunnea f. sp. multigermtubi (strain MB_m1) (Marssonina leaf spot fungus)).